The chain runs to 428 residues: Chaperone SurA (428 aa).

Residues Met-1–Ala-20 form the signal peptide. PpiC domains lie at Ser-171 to Asp-272 and Val-282 to Asp-382.

The protein resides in the periplasm. It carries out the reaction [protein]-peptidylproline (omega=180) = [protein]-peptidylproline (omega=0). Functionally, chaperone involved in the correct folding and assembly of outer membrane proteins. Recognizes specific patterns of aromatic residues and the orientation of their side chains, which are found more frequently in integral outer membrane proteins. May act in both early periplasmic and late outer membrane-associated steps of protein maturation. This chain is Chaperone SurA, found in Salmonella choleraesuis (strain SC-B67).